A 144-amino-acid polypeptide reads, in one-letter code: Large ribosomal subunit protein uL16 (144 aa).

This sequence belongs to the universal ribosomal protein uL16 family. As to quaternary structure, part of the 50S ribosomal subunit.

In terms of biological role, binds 23S rRNA and is also seen to make contacts with the A and possibly P site tRNAs. The protein is Large ribosomal subunit protein uL16 of Bacillus pumilus (strain SAFR-032).